The primary structure comprises 257 residues: Diaminopimelate epimerase (257 aa).

The substrate site is built by Asn-13, Gln-46, and Asn-66. Cys-75 (proton donor) is an active-site residue. Substrate-binding positions include 76-77 (GN), Asn-145, Asn-175, and 193-194 (ER). Cys-202 serves as the catalytic Proton acceptor. 203-204 (GS) serves as a coordination point for substrate.

Belongs to the diaminopimelate epimerase family. In terms of assembly, homodimer.

The protein resides in the cytoplasm. The enzyme catalyses (2S,6S)-2,6-diaminopimelate = meso-2,6-diaminopimelate. It participates in amino-acid biosynthesis; L-lysine biosynthesis via DAP pathway; DL-2,6-diaminopimelate from LL-2,6-diaminopimelate: step 1/1. Its function is as follows. Catalyzes the stereoinversion of LL-2,6-diaminopimelate (L,L-DAP) to meso-diaminopimelate (meso-DAP), a precursor of L-lysine and an essential component of the bacterial peptidoglycan. This Gluconobacter oxydans (strain 621H) (Gluconobacter suboxydans) protein is Diaminopimelate epimerase.